Reading from the N-terminus, the 66-residue chain is Large ribosomal subunit protein bL33c (66 aa).

The protein belongs to the bacterial ribosomal protein bL33 family.

The protein resides in the plastid. It localises to the chloroplast. This is Large ribosomal subunit protein bL33c from Glycine max (Soybean).